The following is a 114-amino-acid chain: uncharacterized protein (114 aa).

Residues Cys-40, Cys-106, and Cys-108 each coordinate Fe cation.

This sequence belongs to the HesB/IscA family. Ycf83 subfamily.

It localises to the plastid. It is found in the chloroplast. This is an uncharacterized protein from Pyropia yezoensis (Susabi-nori).